The primary structure comprises 269 residues: Exodeoxyribonuclease WalJ (269 aa).

Residues His-61, His-63, Asp-65, His-66, and Asp-150 each coordinate a divalent metal cation.

Belongs to the metallo-beta-lactamase superfamily. Fe(2+) is required as a cofactor. Requires Zn(2+) as cofactor. It depends on Mn(2+) as a cofactor.

The protein resides in the cell membrane. In terms of biological role, 5'-&gt;3' double-stranded DNA exonuclease. May be involved in the WalK/WalR signal transduction pathway. Required for accurate coordination of cell division with DNA replication. May play a role in cell wall metabolism. The sequence is that of Exodeoxyribonuclease WalJ from Streptococcus pneumoniae serotype 2 (strain D39 / NCTC 7466).